Reading from the N-terminus, the 62-residue chain is Small ribosomal subunit protein eS31 (62 aa).

4 residues coordinate Zn(2+): C29, C32, C48, and C51. The segment at 29-51 (CPRCGSFMAFHKWPVPRWHCGKC) adopts a C4-type zinc-finger fold.

It belongs to the eukaryotic ribosomal protein eS31 family. Part of the 30S ribosomal subunit. Zn(2+) serves as cofactor.

The protein is Small ribosomal subunit protein eS31 of Hyperthermus butylicus (strain DSM 5456 / JCM 9403 / PLM1-5).